We begin with the raw amino-acid sequence, 236 residues long: MNSYIVIKNSLRDYRSGRIIRKYIRKLNKDEYKHFCAVFRLNVDFSQDDKNPSRKEVIRIIDEEFNFCDLRLFYDIMTVVPNHMNVASIIYSEYEYLLKKSNYKNKKINYTILDKINKYHSIDDIIFMYLHWRKKYNNTCACGKLFKELMKYDILATKYIYNDIINTYKEGDTISINIRLKCKDDIIKHCKSSIGMFAILSSKIIDVDFDVIFFSQISIRYRLIFKKYLIQSLYLQ.

This is an uncharacterized protein from Sus scrofa (Pig).